We begin with the raw amino-acid sequence, 229 residues long: Lytic polysaccharide monooxygenase-like protein ham-7 (229 aa).

The N-terminal stretch at 1 to 17 is a signal peptide; sequence MLTSTLLALASAALASA. His-18 lines the Cu(2+) pocket. Disulfide bonds link Cys-47-Cys-157 and Cys-122-Cys-178. 5 N-linked (GlcNAc...) asparagine glycosylation sites follow: Asn-55, Asn-98, Asn-139, Asn-174, and Asn-180. Residue Ser-206 is the site of GPI-anchor amidated serine attachment. The propeptide at 207–229 is removed in mature form; sequence AAASLARMAGWVPLVAGGLWLML.

Belongs to the X325 family. Cu(2+) serves as cofactor.

It localises to the cell membrane. Functionally, lytic polysaccharide monooxygenase-like protein that has diverged to biological functions other than polysaccharide degradation since it does not perform oxidative cleavage of polysaccharides. Acts as the major cell wall sensor that regulates MAK-1-dependent hyphal anastomosis, the fusion of hyphal cells. May also act as a cell surface-bound protein that functions in the copper-accumulation pathway. The protein is Lytic polysaccharide monooxygenase-like protein ham-7 of Neurospora crassa (strain ATCC 24698 / 74-OR23-1A / CBS 708.71 / DSM 1257 / FGSC 987).